Reading from the N-terminus, the 836-residue chain is Protein-glutamine gamma-glutamyltransferase K (836 aa).

Residues 1 to 33 are compositionally biased toward basic and acidic residues; sequence MDGPRSDMGRSDVSRSDMSRSDMGRSDMGRSDV. Disordered stretches follow at residues 1-68 and 89-125; these read MDGP…SRGG and DDWGREPSDSRDRGSSSRGGRPDSRGGGVNAAGDGTI. Position 46 is a phosphothreonine (Thr46). Ser48, Ser98, and Ser112 each carry phosphoserine. Residues 89 to 112 show a composition bias toward basic and acidic residues; it reads DDWGREPSDSRDRGSSSRGGRPDS. Catalysis depends on residues Cys397, His456, and Asp479. Ca(2+)-binding residues include Asn519, Asp521, Glu568, and Glu573. Ser824 carries the phosphoserine modification.

It belongs to the transglutaminase superfamily. Transglutaminase family. Interacts with PLAAT4. Ca(2+) serves as cofactor. Palmitoylated. Post-translationally, the membrane anchorage region possesses a cluster of five cysteines within which fatty acid(s) may become thioester-linked. It is subject to phorbol ester-stimulated phosphorylation and is hypersensitive to proteolysis, which releases the enzyme in a soluble form. In terms of processing, tyrosine-phosphorylated.

It localises to the membrane. The catalysed reaction is L-glutaminyl-[protein] + L-lysyl-[protein] = [protein]-L-lysyl-N(6)-5-L-glutamyl-[protein] + NH4(+). With respect to regulation, inhibited by retinoic acid, but phorbol ester treatment activates it. Its function is as follows. Catalyzes the cross-linking of proteins and the conjugation of polyamines to proteins. Responsible for cross-linking epidermal proteins during formation of the stratum corneum. Involved in cell proliferation. The sequence is that of Protein-glutamine gamma-glutamyltransferase K (TGM1) from Oryctolagus cuniculus (Rabbit).